A 267-amino-acid polypeptide reads, in one-letter code: 4-hydroxy-2-oxo-heptane-1,7-dioate aldolase (267 aa).

Residue His45 is the Proton acceptor of the active site. Gln147 is a substrate binding site. Residue Glu149 participates in a divalent metal cation binding. Substrate is bound by residues Ala174 and Asp175. Asp175 contacts a divalent metal cation.

It belongs to the HpcH/HpaI aldolase family. As to quaternary structure, homohexamer; trimer of dimers. It depends on a divalent metal cation as a cofactor.

The catalysed reaction is 4-hydroxy-2-oxoheptanedioate = succinate semialdehyde + pyruvate. Its pathway is aromatic compound metabolism; 4-hydroxyphenylacetate degradation; pyruvate and succinate semialdehyde from 4-hydroxyphenylacetate: step 7/7. In terms of biological role, catalyzes the reversible retro-aldol cleavage of 4-hydroxy-2-ketoheptane-1,7-dioate (HKHD) to pyruvate and succinic semialdehyde. The protein is 4-hydroxy-2-oxo-heptane-1,7-dioate aldolase of Shigella flexneri.